The chain runs to 485 residues: Glutamyl-tRNA(Gln) amidotransferase subunit A (485 aa).

Residues Lys-79 and Ser-154 each act as charge relay system in the active site. Catalysis depends on Ser-178, which acts as the Acyl-ester intermediate.

This sequence belongs to the amidase family. GatA subfamily. In terms of assembly, heterotrimer of A, B and C subunits.

It carries out the reaction L-glutamyl-tRNA(Gln) + L-glutamine + ATP + H2O = L-glutaminyl-tRNA(Gln) + L-glutamate + ADP + phosphate + H(+). Its function is as follows. Allows the formation of correctly charged Gln-tRNA(Gln) through the transamidation of misacylated Glu-tRNA(Gln) in organisms which lack glutaminyl-tRNA synthetase. The reaction takes place in the presence of glutamine and ATP through an activated gamma-phospho-Glu-tRNA(Gln). The sequence is that of Glutamyl-tRNA(Gln) amidotransferase subunit A from Bacillus velezensis (strain DSM 23117 / BGSC 10A6 / LMG 26770 / FZB42) (Bacillus amyloliquefaciens subsp. plantarum).